A 323-amino-acid polypeptide reads, in one-letter code: Ubiquinone biosynthesis protein COQ4, mitochondrial (323 aa).

Residues His203, Asp204, His207, and Glu219 each coordinate Zn(2+).

This sequence belongs to the COQ4 family. In terms of assembly, component of a multi-subunit COQ enzyme complex, composed of at least COQ3, COQ4, COQ5, COQ6, COQ7 and COQ9. Requires Zn(2+) as cofactor.

The protein resides in the mitochondrion inner membrane. It carries out the reaction a 4-hydroxy-3-methoxy-5-(all-trans-polyprenyl)benzoate + H(+) = a 2-methoxy-6-(all-trans-polyprenyl)phenol + CO2. It participates in cofactor biosynthesis; ubiquinone biosynthesis. Lyase that catalyzes the C1-decarboxylation of 4-hydroxy-3-methoxy-5-(all-trans-polyprenyl)benzoic acid into 2-methoxy-6-(all-trans-polyprenyl)phenol during ubiquinone biosynthesis. The polypeptide is Ubiquinone biosynthesis protein COQ4, mitochondrial (Eremothecium gossypii (strain ATCC 10895 / CBS 109.51 / FGSC 9923 / NRRL Y-1056) (Yeast)).